The following is a 292-amino-acid chain: Elongation factor Ts (292 aa).

The tract at residues 80-83 (TDFV) is involved in Mg(2+) ion dislocation from EF-Tu.

The protein belongs to the EF-Ts family.

The protein localises to the cytoplasm. Associates with the EF-Tu.GDP complex and induces the exchange of GDP to GTP. It remains bound to the aminoacyl-tRNA.EF-Tu.GTP complex up to the GTP hydrolysis stage on the ribosome. In Cupriavidus taiwanensis (strain DSM 17343 / BCRC 17206 / CCUG 44338 / CIP 107171 / LMG 19424 / R1) (Ralstonia taiwanensis (strain LMG 19424)), this protein is Elongation factor Ts.